Consider the following 248-residue polypeptide: Ras-like protein family member 11B (248 aa).

The small GTPase-like stretch occupies residues 29 to 246 (AGRRLVKIAV…ALSAKVRTVT (218 aa)). Residues 40–47 (GASGVGKT), 87–94 (DTPGIQVH), and 152–155 (NKAD) each bind GTP. The tract at residues 205–226 (QQPSSTPEKRRTSLIPRPKSPN) is disordered.

This sequence belongs to the small GTPase superfamily. Ras family. As to expression, widely expressed with highest levels in placenta and primary macrophages.

The catalysed reaction is GTP + H2O = GDP + phosphate + H(+). The chain is Ras-like protein family member 11B from Homo sapiens (Human).